Here is a 505-residue protein sequence, read N- to C-terminus: Ribose import ATP-binding protein RbsA (505 aa).

2 ABC transporter domains span residues 12-249 and 259-504; these read LQMK…VGRK and VKKG…VAFS. 44-51 contacts ATP; it reads GENGAGKS.

It belongs to the ABC transporter superfamily. Ribose importer (TC 3.A.1.2.1) family. In terms of assembly, the complex is composed of an ATP-binding protein (RbsA), two transmembrane proteins (RbsC) and a solute-binding protein (RbsB).

The protein localises to the cell membrane. It carries out the reaction D-ribose(out) + ATP + H2O = D-ribose(in) + ADP + phosphate + H(+). Its function is as follows. Part of the ABC transporter complex RbsABC involved in ribose import. Responsible for energy coupling to the transport system. This Clostridium tetani (strain Massachusetts / E88) protein is Ribose import ATP-binding protein RbsA.